The following is a 764-amino-acid chain: Probable cyclic nucleotide-gated ion channel 20, chloroplastic (764 aa).

The N-terminal 25 residues, 1–25 (MASHNENDDIPMLPISDPSSRTRAR), are a transit peptide targeting the chloroplast. Positions 1-40 (MASHNENDDIPMLPISDPSSRTRARAFTSRSRSVSLSNPT) are disordered. Residues 19–33 (SSRTRARAFTSRSRS) are compositionally biased toward low complexity. At 26 to 204 (AFTSRSRSVS…PHAKEVQTWT (179 aa)) the chain is on the stromal side. The chain crosses the membrane as a helical span at residues 205 to 225 (KFFALSCLLAIFIDPLFFFLI). Residues 226 to 242 (KVQEQNKCIMIDWPMTK) are Lumenal-facing. Residues 243-263 (AFVAVRSVTDVIFTMNILLQF) form a helical membrane-spanning segment. Over 264 to 295 (RLAYVARESTVVGAGQLVSHPKKIALHYLKGK) the chain is Stromal. The helical transmembrane segment at 296–316 (FFLDLFIVMPLPQILILWIIP) threads the bilayer. Over 317-329 (AHLGASGANYAKN) the chain is Lumenal. The helical transmembrane segment at 330–350 (LLRAAVLFQYIPKLYRLLPFL) threads the bilayer. Residues 351–366 (AGQTPTGFIFESAWAN) are Stromal-facing. A helical membrane pass occupies residues 367–387 (FVINLLTFMLAGHVVGSCWYL). Over 388 to 488 (FGLQRVNQCL…GNQVPSYFLG (101 aa)) the chain is Lumenal. The helical transmembrane segment at 489–509 (EVFFTMGIIGLGLLLFALLIG) threads the bilayer. At 510–764 (NMQNFLQALG…LCTPQSSYSL (255 aa)) the chain is on the stromal side. A nucleoside 3',5'-cyclic phosphate contacts are provided by residues 593 to 710 (IFSL…EDVT) and Glu658. Positions 713 to 729 (FSRFLRSHRVQGAIRYD) are calmodulin-binding. In terms of domain architecture, IQ spans 734–763 (RLRAARQIQVAWRYRRRRLHRLCTPQSSYS).

Belongs to the cyclic nucleotide-gated cation channel (TC 1.A.1.5) family. In terms of assembly, homotetramer or heterotetramer.

The protein localises to the plastid. Its subcellular location is the chloroplast thylakoid membrane. In terms of biological role, probable cyclic nucleotide-gated ion channel. The chain is Probable cyclic nucleotide-gated ion channel 20, chloroplastic (CNGC20) from Arabidopsis thaliana (Mouse-ear cress).